Here is a 152-residue protein sequence, read N- to C-terminus: Phospholipase A2 (152 aa).

An N-terminal signal peptide occupies residues 1–20; the sequence is MAACHRILLLLSVAVASGAA. 8 disulfides stabilise this stretch: Cys39-Cys96, Cys53-Cys142, Cys55-Cys70, Cys69-Cys124, Cys75-Cys149, Cys76-Cys117, Cys85-Cys110, and Cys103-Cys115. Ca(2+)-binding residues include Gly56 and Gly58. Residue His73 is part of the active site. Asp74 contacts Ca(2+). The active site involves Asp118.

This sequence belongs to the phospholipase A2 family. Expressed by the venom gland. Heavily expressed in the venom gland transcriptome.

The protein localises to the secreted. It carries out the reaction a 1,2-diacyl-sn-glycero-3-phosphocholine + H2O = a 1-acyl-sn-glycero-3-phosphocholine + a fatty acid + H(+). PA2 catalyzes the calcium-dependent hydrolysis of the 2-acyl groups in 3-sn-phosphoglycerides. The protein is Phospholipase A2 of Meiacanthus atrodorsalis (Forktail blenny).